The sequence spans 165 residues: Nucleotide-binding protein PMN2A_1813 (165 aa).

This sequence belongs to the YajQ family.

In terms of biological role, nucleotide-binding protein. This chain is Nucleotide-binding protein PMN2A_1813, found in Prochlorococcus marinus (strain NATL2A).